A 237-amino-acid polypeptide reads, in one-letter code: Mediator of RNA polymerase II transcription subunit 20 (237 aa).

It belongs to the Mediator complex subunit 20 family. In terms of assembly, component of the Mediator complex.

It localises to the nucleus. Component of the Mediator complex, a coactivator involved in the regulated transcription of nearly all RNA polymerase II-dependent genes. Mediator functions as a bridge to convey information from gene-specific regulatory proteins to the basal RNA polymerase II transcription machinery. Mediator is recruited to promoters by direct interactions with regulatory proteins and serves as a scaffold for the assembly of a functional preinitiation complex with RNA polymerase II and the general transcription factors. The chain is Mediator of RNA polymerase II transcription subunit 20 (SRB2) from Scheffersomyces stipitis (strain ATCC 58785 / CBS 6054 / NBRC 10063 / NRRL Y-11545) (Yeast).